Consider the following 96-residue polypeptide: UPF0235 protein Sputcn32_2690 (96 aa).

The protein belongs to the UPF0235 family.

In Shewanella putrefaciens (strain CN-32 / ATCC BAA-453), this protein is UPF0235 protein Sputcn32_2690.